The primary structure comprises 289 residues: Ribonuclease HII (289 aa).

The disordered stretch occupies residues 1 to 55 (MIRDQAKTPGRAKSAAAAKASPAAKGGGNEAAQSAAGKAAAKPAAKPATSKSGKG). Low complexity-rich tracts occupy residues 7–24 (KTPG…SPAA) and 31–55 (AAQS…SGKG). One can recognise an RNase H type-2 domain in the interval 76 to 264 (WPVAGCDEAG…VVAARRKHQP (189 aa)). A divalent metal cation contacts are provided by Asp-82, Glu-83, and Asp-173.

This sequence belongs to the RNase HII family. It depends on Mn(2+) as a cofactor. Mg(2+) is required as a cofactor.

The protein resides in the cytoplasm. The catalysed reaction is Endonucleolytic cleavage to 5'-phosphomonoester.. Functionally, endonuclease that specifically degrades the RNA of RNA-DNA hybrids. This chain is Ribonuclease HII, found in Bradyrhizobium sp. (strain BTAi1 / ATCC BAA-1182).